Reading from the N-terminus, the 309-residue chain is Probable lipid kinase YegS-like (309 aa).

Residues 1-134 form the DAGKc domain; sequence MAPSHWRLIL…VDLLRIDAEH (134 aa). Residues Thr39, 65-71, and Thr96 each bind ATP; that span reads GDGTLSE. Mg(2+) contacts are provided by Val219, Asp222, and Leu224. Catalysis depends on Glu280, which acts as the Proton acceptor.

The protein belongs to the diacylglycerol/lipid kinase family. YegS lipid kinase subfamily. The cofactor is Mg(2+). It depends on Ca(2+) as a cofactor.

It is found in the cytoplasm. In terms of biological role, probably phosphorylates lipids; the in vivo substrate is unknown. In Xanthomonas oryzae pv. oryzae (strain MAFF 311018), this protein is Probable lipid kinase YegS-like.